The primary structure comprises 119 residues: Large ribosomal subunit protein uL22 (119 aa).

It belongs to the universal ribosomal protein uL22 family. In terms of assembly, part of the 50S ribosomal subunit.

In terms of biological role, this protein binds specifically to 23S rRNA; its binding is stimulated by other ribosomal proteins, e.g. L4, L17, and L20. It is important during the early stages of 50S assembly. It makes multiple contacts with different domains of the 23S rRNA in the assembled 50S subunit and ribosome. Its function is as follows. The globular domain of the protein is located near the polypeptide exit tunnel on the outside of the subunit, while an extended beta-hairpin is found that lines the wall of the exit tunnel in the center of the 70S ribosome. The chain is Large ribosomal subunit protein uL22 from Rickettsia rickettsii (strain Iowa).